Here is a 451-residue protein sequence, read N- to C-terminus: Probable D-serine dehydratase (451 aa).

The segment at 1–55 (MPGRTRPSCRLAITFTPRPDSATPRAGRAAPATGRRSNRSRSTLSATASPMPRRP) is disordered. Over residues 22-35 (ATPRAGRAAPATGR) the composition is skewed to low complexity. At Lys118 the chain carries N6-(pyridoxal phosphate)lysine.

It belongs to the serine/threonine dehydratase family. DsdA subfamily. Pyridoxal 5'-phosphate is required as a cofactor.

The catalysed reaction is D-serine = pyruvate + NH4(+). In Paracidovorax citrulli (strain AAC00-1) (Acidovorax citrulli), this protein is Probable D-serine dehydratase.